The sequence spans 69 residues: KDKENCIGKHHECTDDRDSCCKGKLFRYQCQCFKVIDGKKETKRCACVTPLHYKMAEMAVSVFKKMFKN.

4 cysteine pairs are disulfide-bonded: cysteine 6–cysteine 21, cysteine 13–cysteine 30, cysteine 20–cysteine 47, and cysteine 32–cysteine 45.

In terms of tissue distribution, expressed by the venom gland.

The protein resides in the secreted. The protein localises to the target cell membrane. In terms of biological role, spider venom toxin that shows calcium channel blocking activity and exhibits cytolytic activity by affecting the outer leaflet curvature and/or pore formation across the membrane. It blocks L-type calcium channels (Cav1/CACNA1) in mammalian neurons at nanomolar concentrations. Furthermore, it produces a slow voltage-independent block of mid/low and high voltage-activated calcium channels in cockroach neurons. Potassium ions, histamine, M-ctenitoxin-Cs1a (AC P83619), CSTX-9 (AC P58604), and CSTX-13 (AC P83919) synergistically increase the insecticidal activity of this toxin. In vivo, it causes paralysis in blow flies and provokes death in drosophila. This chain is Toxin CSTX-11, found in Cupiennius salei (American wandering spider).